The primary structure comprises 177 residues: O-acetyl-ADP-ribose deacetylase (177 aa).

A Macro domain is found at 1–175 (MNSRIHVIHG…LYQRLLTQQG (175 aa)). Substrate contacts are provided by residues 11–12 (DI), N25, 33–35 (GVD), and 122–126 (STGVY). Catalysis depends on D35, which acts as the Proton acceptor.

It belongs to the MacroD-type family. YmdB subfamily. In terms of assembly, homodimer. Interacts with RNase III.

It catalyses the reaction 3''-O-acetyl-ADP-D-ribose + H2O = ADP-D-ribose + acetate + H(+). The catalysed reaction is 2''-O-acetyl-ADP-D-ribose + H2O = ADP-D-ribose + acetate + H(+). In terms of biological role, deacetylates O-acetyl-ADP ribose to yield ADP-ribose and free acetate. Down-regulates ribonuclease 3 (RNase III) activity. Acts by interacting directly with the region of the ribonuclease that is required for dimerization/activation. The sequence is that of O-acetyl-ADP-ribose deacetylase from Citrobacter rodentium (strain ICC168) (Citrobacter freundii biotype 4280).